The chain runs to 259 residues: Probable 6-phosphogluconolactonase 2 (259 aa).

The protein belongs to the glucosamine/galactosamine-6-phosphate isomerase family. 6-phosphogluconolactonase subfamily.

Its subcellular location is the cytoplasm. It localises to the cytosol. It carries out the reaction 6-phospho-D-glucono-1,5-lactone + H2O = 6-phospho-D-gluconate + H(+). Its pathway is carbohydrate degradation; pentose phosphate pathway; D-ribulose 5-phosphate from D-glucose 6-phosphate (oxidative stage): step 2/3. Catalyzes the hydrolysis of 6-phosphogluconolactone to 6-phosphogluconate. The sequence is that of Probable 6-phosphogluconolactonase 2 from Arabidopsis thaliana (Mouse-ear cress).